Consider the following 727-residue polypeptide: NADH-ubiquinone oxidoreductase 75 kDa subunit, mitochondrial (727 aa).

Residues 1-23 (MLRIPVRKALVGLSKSPKGCVRT) constitute a mitochondrion transit peptide. The 2Fe-2S ferredoxin-type domain maps to 30–108 (NLIEVFVDGQ…GWNILTNSEK (79 aa)). 3 residues coordinate [2Fe-2S] cluster: Cys-64, Cys-75, and Cys-78. Lys-84 bears the N6-acetyllysine mark. Cys-92 serves as a coordination point for [2Fe-2S] cluster. The 4Fe-4S His(Cys)3-ligated-type domain occupies 108–147 (KSKKAREGVMEFLLANHPLDCPICDQGGECDLQDQSMMFG). Residues His-124, Cys-128, Cys-131, Cys-137, Cys-176, Cys-179, Cys-182, and Cys-226 each contribute to the [4Fe-4S] cluster site. Residues 245-301 (TRKTESIDVMDAVGSNIVVSTRTGEVMRILPRMHEDINEEWISDKTRFAYDGLKRQR) form the 4Fe-4S Mo/W bis-MGD-type domain. Residues Lys-467, Lys-499, and Lys-709 each carry the N6-acetyllysine modification.

The protein belongs to the complex I 75 kDa subunit family. As to quaternary structure, core subunit of respiratory chain NADH dehydrogenase (Complex I) which is composed of 45 different subunits. This is the largest subunit of complex I and it is a component of the iron-sulfur (IP) fragment of the enzyme. Complex I associates with ubiquinol-cytochrome reductase complex (Complex III) to form supercomplexes. Interacts with MDM2 and AKAP1. The cofactor is [2Fe-2S] cluster. [4Fe-4S] cluster is required as a cofactor.

The protein localises to the mitochondrion inner membrane. The enzyme catalyses a ubiquinone + NADH + 5 H(+)(in) = a ubiquinol + NAD(+) + 4 H(+)(out). Functionally, core subunit of the mitochondrial membrane respiratory chain NADH dehydrogenase (Complex I) which catalyzes electron transfer from NADH through the respiratory chain, using ubiquinone as an electron acceptor. Essential for catalysing the entry and efficient transfer of electrons within complex I. Plays a key role in the assembly and stability of complex I and participates in the association of complex I with ubiquinol-cytochrome reductase complex (Complex III) to form supercomplexes. This is NADH-ubiquinone oxidoreductase 75 kDa subunit, mitochondrial (NDUFS1) from Macaca fascicularis (Crab-eating macaque).